We begin with the raw amino-acid sequence, 81 residues long: Large ribosomal subunit protein bL31B (81 aa).

This sequence belongs to the bacterial ribosomal protein bL31 family. Type B subfamily. Part of the 50S ribosomal subunit.

This Lactobacillus acidophilus (strain ATCC 700396 / NCK56 / N2 / NCFM) protein is Large ribosomal subunit protein bL31B.